A 472-amino-acid polypeptide reads, in one-letter code: ATP synthase subunit beta (472 aa).

Residue 155 to 162 participates in ATP binding; sequence GGAGVGKT.

Belongs to the ATPase alpha/beta chains family. F-type ATPases have 2 components, CF(1) - the catalytic core - and CF(0) - the membrane proton channel. CF(1) has five subunits: alpha(3), beta(3), gamma(1), delta(1), epsilon(1). CF(0) has three main subunits: a(1), b(2) and c(9-12). The alpha and beta chains form an alternating ring which encloses part of the gamma chain. CF(1) is attached to CF(0) by a central stalk formed by the gamma and epsilon chains, while a peripheral stalk is formed by the delta and b chains.

The protein resides in the cell membrane. It catalyses the reaction ATP + H2O + 4 H(+)(in) = ADP + phosphate + 5 H(+)(out). In terms of biological role, produces ATP from ADP in the presence of a proton gradient across the membrane. The catalytic sites are hosted primarily by the beta subunits. This Fervidobacterium islandicum protein is ATP synthase subunit beta.